The primary structure comprises 430 residues: Glutamate-1-semialdehyde 2,1-aminomutase (430 aa).

Lys-267 carries the post-translational modification N6-(pyridoxal phosphate)lysine.

The protein belongs to the class-III pyridoxal-phosphate-dependent aminotransferase family. HemL subfamily. As to quaternary structure, homodimer. It depends on pyridoxal 5'-phosphate as a cofactor.

The protein resides in the cytoplasm. It catalyses the reaction (S)-4-amino-5-oxopentanoate = 5-aminolevulinate. Its pathway is porphyrin-containing compound metabolism; protoporphyrin-IX biosynthesis; 5-aminolevulinate from L-glutamyl-tRNA(Glu): step 2/2. In Thermomicrobium roseum (strain ATCC 27502 / DSM 5159 / P-2), this protein is Glutamate-1-semialdehyde 2,1-aminomutase.